Consider the following 846-residue polypeptide: MDLQDFSHKLAEATKNLTPAERASLKKIFEGVSAEVFSQPAPVSAVATGAESGIPDGPTPRHVKLKENFLKQVPSITVQRAVAITKIAKENPGLPKPLLRAKTFRYCCETAPLVIQDHELIVGSPNGAPRAGAFSPEVAWRWLQDELDTIGSRPQDPFYISEEDKKVLREEVFPFWQNKSVDEFCEGQYREADLWEMSGESFVSDCSYHAVNGGGDSNPGYDVILMKKGMLDIQREAREKLEQLDYANPEDIDKIYFYKSVIETAEGVMIYARRLSAYAAELAARETDPRRKAELQKISEVNARVPAHAPSNFWEAIQAVWTVESLLVVEENQTGMSIGRVDQYMYPFYRADIDSGRLTEYEAFDLAGCMLVKMSEMMWITSEGASKFFAGYQPFVNMCVGGVTREGHDATNDLTYMLMDAVRHVRIYQPTLATRVHNKSPQKYLKKIVDVIRSGMGFPAVHFDDAHIKMMLAKGVSIEDARDYCLMGCVEPQKSGRLYQWTSTGYTQWPICIELVLNHGVPLWYGKKVTPDMGDLSQYDTYEKFEAAVKEQIRWITKNTSVATVISQRAHRELAPKPLMSLMYEGCMESGRDVSAGGAMYNFGPGVVWSGLATYVDSMAAIKKLVYDDRKYTLAQLNEALKADFAGYDQILADCLAAPKYGNDDDYADMIAADLVHFTETEHRKYKTLYSVLSHGTLSISNNTPFGQLLGASANGRRAWMPLSDGISPTQGADYKGPTAIIKSVSKMANDNMNIGMVHNFKLMSGLLDTPEGENGLITLIRTACMLGNGEMQFNYLDNELLLDAQKHPEKYRDLVVRVAGYSAFFVELCKDVQDEIISRTMLHGF.

Positions 60–718 (PRHVKLKENF…LLGASANGRR (659 aa)) constitute a PFL domain. C489 (cysteine radical intermediate) is an active-site residue. E491 acts as the Proton acceptor in catalysis. Residues 725–846 (DGISPTQGAD…IISRTMLHGF (122 aa)) enclose the Glycine radical domain. Position 821 is a glycine radical (G821).

It belongs to the glycyl radical enzyme (GRE) family. CutC subfamily. In terms of assembly, homodimer. Requires the activating protein CutD to generate the key active site glycyl radical on Gly-821 that is involved in catalysis.

The enzyme catalyses choline = trimethylamine + acetaldehyde. It participates in amine and polyamine metabolism; choline degradation. Its function is as follows. Glycine radical enzyme that catalyzes the cleavage of a C-N bond in choline, producing trimethylamine (TMA) and acetaldehyde. Is involved in the anaerobic choline utilization pathway that allows D.alaskensis to grow on choline as a source of carbon and energy. Is strictly specific for choline as substrate. This chain is Choline trimethylamine-lyase, found in Oleidesulfovibrio alaskensis (strain ATCC BAA-1058 / DSM 17464 / G20) (Desulfovibrio alaskensis).